A 960-amino-acid chain; its full sequence is Dynamin-like GTPase OPA1, mitochondrial (960 aa).

A mitochondrion-targeting transit peptide spans 1-87; that stretch reads MWRAGRAALA…TKYGYQPRRN (87 aa). Topologically, residues 88–96 are mitochondrial matrix; the sequence is FWPARLAAR. Residues 97–113 traverse the membrane as a helical segment; it reads LLKLRYIILGSAVGGGY. Residues 114-770 are Mitochondrial intermembrane-facing; it reads TAKKTFDEWK…NAIENMIGPD (657 aa). Residues 210-254 are a coiled coil; sequence SDKEKIDQLQEELLHTQLKYQRILERLEKENKELRKLVLQKDDKG. Residues 217 to 222 carry the LQQQIQ motif motif; that stretch reads QLQEEL. Lys-228 bears the N6-acetyllysine mark. The LQQQIQ motif motif lies at 234 to 239; the sequence is ERLEKE. In terms of domain architecture, Dynamin-type G spans 285-561; the sequence is QDHLPRVVVV…FWKMVRESVE (277 aa). A G1 motif region spans residues 295 to 302; that stretch reads GDQSAGKT. Ser-298, Gly-300, Lys-301, Thr-302, Ser-303, and Gly-317 together coordinate GTP. Thr-302 contributes to the Mg(2+) binding site. The interval 321-324 is G2 motif; the sequence is MMTR. Mg(2+) contacts are provided by Thr-323 and Asp-398. The G3 motif stretch occupies residues 398–401; it reads DLPG. The interval 467–470 is G4 motif; sequence TKVD. Lys-468, Asp-470, and Thr-503 together coordinate GTP. The tract at residues 501-504 is G5 motif; it reads VVTG. Stalk region regions lie at residues 589 to 836 and 874 to 928; these read DRNE…IKDT and CNDV…VKLL. Residues 736 to 856 are paddle region; sequence SDKQQWDAAI…KTALNHCNLC (121 aa). Residues 771–781 lie within the membrane without spanning it; sequence WKKRWIYWKNR. The Mitochondrial intermembrane portion of the chain corresponds to 782–960; that stretch reads TQEQCVHNET…AFIEALHQEK (179 aa). A disulfide bridge links Cys-856 with Cys-874. Residues 895–960 adopt a coiled-coil conformation; that stretch reads RQQLTNTEVR…AFIEALHQEK (66 aa).

Belongs to the TRAFAC class dynamin-like GTPase superfamily. Dynamin/Fzo/YdjA family. In terms of assembly, oligomeric complex consisting of membrane-bound and soluble forms of OPA1. Interacts with RCC1L; RCC1L acts as a guanine nucleotide exchange factor (GEF) for OPA1 by exchanging bound GDP for free GTP. Interacts with CHCHD3 and IMMT; these interactions occur preferentially with soluble OPA1 forms. Interacts with PRELID1. In terms of processing, cleaved by OMA1 or YME1L downstream of the transmembrane region in response to different signals to generate soluble forms. Cleaved by OMA1 at position S1 following stress conditions, generating the short soluble form (Dynamin-like GTPase OPA1, short form; S-OPA1). AFG3L2 is involved in the regulation of OMA1-dependent processing of OPA1. PARL-dependent proteolytic processing releases an antiapoptotic soluble form not required for mitochondrial fusion. Post-translationally, cleavage at position S2 by YME1L is required to mediate oxidative phosphorylation (OXPHOS)-induced mitochondrial fusion. Cleavage occurs in the sequence motif Leu-Gln-Gln-Gln-Ile-Gln (LQQQIQ). As to expression, expressed in brain as well as retinal ganglion, starbust amacrine and horizontal cells of the retina. Absent from nerve fibers and photoreceptor cells of the retina.

Its subcellular location is the mitochondrion inner membrane. It is found in the mitochondrion intermembrane space. The enzyme catalyses GTP + H2O = GDP + phosphate + H(+). With respect to regulation, activated by guanine nucleotide exchange factor RCC1L. Its function is as follows. Dynamin-related GTPase that is essential for normal mitochondrial morphology by mediating fusion of the mitochondrial inner membranes, regulating cristae morphology and maintaining respiratory chain function. Exists in two forms: the transmembrane, long form (Dynamin-like GTPase OPA1, long form; L-OPA1), which is tethered to the inner mitochondrial membrane, and the short soluble form (Dynamin-like GTPase OPA1, short form; S-OPA1), which results from proteolytic cleavage and localizes in the intermembrane space. Both forms (L-OPA1 and S-OPA1) cooperate to catalyze the fusion of the mitochondrial inner membrane. The equilibrium between L-OPA1 and S-OPA1 is essential: excess levels of S-OPA1, produced by cleavage by OMA1 following loss of mitochondrial membrane potential, lead to an impaired equilibrium between L-OPA1 and S-OPA1, inhibiting mitochondrial fusion. The balance between L-OPA1 and S-OPA1 also influences cristae shape and morphology. Involved in remodeling cristae and the release of cytochrome c during apoptosis. Proteolytic processing by PARL in response to intrinsic apoptotic signals may lead to disassembly of OPA1 oligomers and release of the caspase activator cytochrome C (CYCS) into the mitochondrial intermembrane space. Acts as a regulator of T-helper Th17 cells, which are characterized by cells with fused mitochondria with tight cristae, by mediating mitochondrial membrane remodeling: OPA1 is required for interleukin-17 (IL-17) production. Its role in mitochondrial morphology is required for mitochondrial genome maintenance. In terms of biological role, constitutes the transmembrane long form (L-OPA1) that plays a central role in mitochondrial inner membrane fusion and cristae morphology. L-OPA1 and the soluble short form (S-OPA1) form higher-order helical assemblies that coordinate the fusion of mitochondrial inner membranes. Inner membrane-anchored L-OPA1 molecules initiate membrane remodeling by recruiting soluble S-OPA1 to rapidly polymerize into a flexible cylindrical scaffold encaging the mitochondrial inner membrane. Once at the membrane surface, the formation of S-OPA1 helices induce bilayer curvature. OPA1 dimerization through the paddle region, which inserts into cardiolipin-containing membrane, promotes GTP hydrolysis and the helical assembly of a flexible OPA1 lattice on the membrane, which drives membrane curvature and mitochondrial fusion. Plays a role in the maintenance and remodeling of mitochondrial cristae, some invaginations of the mitochondrial inner membrane that provide an increase in the surface area. Probably acts by forming helical filaments at the inside of inner membrane tubes with the shape and dimensions of crista junctions. The equilibrium between L-OPA1 and S-OPA1 influences cristae shape and morphology: increased L-OPA1 levels promote cristae stacking and elongated mitochondria, while increased S-OPA1 levels correlated with irregular cristae packing and round mitochondria shape. Functionally, constitutes the soluble short form (S-OPA1) generated by cleavage by OMA1, which plays a central role in mitochondrial inner membrane fusion and cristae morphology. The transmembrane long form (L-OPA1) and the S-OPA1 form higher-order helical assemblies that coordinate the fusion of mitochondrial inner membranes. Inner membrane-anchored L-OPA1 molecules initiate membrane remodeling by recruiting soluble S-OPA1 to rapidly polymerize into a flexible cylindrical scaffold encaging the mitochondrial inner membrane. Once at the membrane surface, the formation of S-OPA1 helices induce bilayer curvature. OPA1 dimerization through the paddle region, which inserts into cardiolipin-containing membrane, promotes GTP hydrolysis and the helical assembly of a flexible OPA1 lattice on the membrane, which drives membrane curvature and mitochondrial fusion. Excess levels of S-OPA1 produced by cleavage by OMA1 following stress conditions that induce loss of mitochondrial membrane potential, lead to an impaired equilibrium between L-OPA1 and S-OPA1, thereby inhibiting mitochondrial fusion. Involved in mitochondrial safeguard in response to transient mitochondrial membrane depolarization by mediating flickering: cleavage by OMA1 leads to excess production of S-OPA1, preventing mitochondrial hyperfusion. Plays a role in the maintenance and remodeling of mitochondrial cristae, some invaginations of the mitochondrial inner membrane that provide an increase in the surface area. Probably acts by forming helical filaments at the inside of inner membrane tubes with the shape and dimensions of crista junctions. The equilibrium between L-OPA1 and S-OPA1 influences cristae shape and morphology: increased L-OPA1 levels promote cristae stacking and elongated mitochondria, while increased S-OPA1 levels correlated with irregular cristae packing and round mitochondria shape. Isoforms that contain the alternative exon 4b are required for mitochondrial genome maintenance, possibly by anchoring the mitochondrial nucleoids to the inner mitochondrial membrane. The protein is Dynamin-like GTPase OPA1, mitochondrial of Rattus norvegicus (Rat).